A 420-amino-acid polypeptide reads, in one-letter code: Histidine--tRNA ligase (420 aa).

This sequence belongs to the class-II aminoacyl-tRNA synthetase family. Homodimer.

The protein resides in the cytoplasm. It carries out the reaction tRNA(His) + L-histidine + ATP = L-histidyl-tRNA(His) + AMP + diphosphate + H(+). In Staphylococcus aureus (strain Mu3 / ATCC 700698), this protein is Histidine--tRNA ligase.